Consider the following 860-residue polypeptide: Glucans biosynthesis glucosyltransferase H (860 aa).

Helical transmembrane passes span 146–166 (ILLILMLGQTIVAGWYMKGIL), 200–220 (ILLLFGILFCWVSAGFWTALM), 519–539 (VFLTGVMSYLSAPLWFFFLVL), 576–596 (LFSTTIVLLFLPKLLSVILIW), 610–630 (TVSMLLEMLFSVLLAPVRMLF), and 686–706 (FLWWLAPIVVSLMLSIPVSVI).

This sequence belongs to the glycosyltransferase 2 family. OpgH subfamily.

It localises to the cell inner membrane. The protein operates within glycan metabolism; osmoregulated periplasmic glucan (OPG) biosynthesis. Its function is as follows. Involved in the biosynthesis of osmoregulated periplasmic glucans (OPGs). The protein is Glucans biosynthesis glucosyltransferase H of Pseudomonas syringae pv. syringae (strain B728a).